Here is a 275-residue protein sequence, read N- to C-terminus: Galaxin-2 (275 aa).

The signal sequence occupies residues 1-20; sequence MTRFTSIGLCAVLLFNVCSC.

In terms of tissue distribution, component of the acid-insoluble and acid-soluble organic matrix of the aragonitic skeleton (at protein level).

The protein localises to the secreted. This chain is Galaxin-2, found in Acropora millepora (Staghorn coral).